The chain runs to 364 residues: Medium-wave-sensitive opsin 1 (364 aa).

Over 1–52 (MAQRWGPHALSGVQAQDAYEDSTQASLFTYTNSNNTRGPFEGPNYHIAPRWV) the chain is Extracellular. The tract at residues 17 to 43 (DAYEDSTQASLFTYTNSNNTRGPFEGP) is required for 11-cis-retinal regeneration. An N-linked (GlcNAc...) asparagine glycan is attached at N34. A helical membrane pass occupies residues 53–77 (YHLTSAWMTIVVIASIFTNGLVLVA). Topologically, residues 78 to 89 (TMRFKKLRHPLN) are cytoplasmic. The helical transmembrane segment at 90–115 (WILVNLAVADLAETVIASTISVVNQV) threads the bilayer. Residues 116–129 (YGYFVLGHPLCVVE) lie on the Extracellular side of the membrane. Residues C126 and C203 are joined by a disulfide bond. The helical transmembrane segment at 130 to 149 (GYTVSLCGITGLWSLAIISW) threads the bilayer. Topologically, residues 150 to 168 (ERWLVVCKPFGNVRFDAKL) are cytoplasmic. The helical transmembrane segment at 169-192 (AIVGIVFSWVWSAVWTAPPIFGWS) threads the bilayer. The Extracellular segment spans residues 193–218 (RYWPYGLKTSCGPDVFSGTSYPGVQS). A helical membrane pass occupies residues 219-246 (YMMVLMVTCCITPLSIIVLCYLHVWLAI). The Cytoplasmic segment spans residues 247-268 (RAVAKQQKESESTQKAEKEVTR). The chain crosses the membrane as a helical span at residues 269 to 292 (MVVVMVLAYCLCWGPYAFFACFAT). Residues 293–300 (ANPGYSFH) are Extracellular-facing. A helical membrane pass occupies residues 301–325 (PLVAALPAYFAKSATIYNPIIYVFM). Position 312 is an N6-(retinylidene)lysine (K312). Over 326–364 (NRQFRNCILQLFGKKVEDSSELSSTSRTEASSVSSVSPA) the chain is Cytoplasmic.

It belongs to the G-protein coupled receptor 1 family. Opsin subfamily. Monomer. Homodimer. Homotetramer. Post-translationally, O-glycosylated. In terms of processing, phosphorylated on some or all of the serine and threonine residues present in the C-terminal region. As to expression, expressed in cone photoreceptor cells.

The protein localises to the membrane. Its function is as follows. Visual pigments are the light-absorbing molecules that mediate vision. They consist of an apoprotein, opsin, covalently linked to cis-retinal. May increase spectral sensitivity in dim light. The polypeptide is Medium-wave-sensitive opsin 1 (OPN1MW) (Cavia porcellus (Guinea pig)).